The primary structure comprises 658 residues: Outer dynein arm-docking complex subunit 1 (658 aa).

Coiled coils occupy residues 11-156 (KEVH…RYLN), 186-234 (REEA…KNDE), and 303-380 (NFIN…TDIQ). Disordered stretches follow at residues 496–552 (DEEE…SVSH) and 574–658 (GAPV…RGYN). Phosphoserine is present on residues Ser-500, Ser-506, Ser-507, and Ser-509. Low complexity-rich tracts occupy residues 506-519 (SSPS…QISL), 574-583 (GAPVSSRSSQ), 592-604 (TSSS…TGYL), and 621-639 (SMGS…HASS).

It belongs to the ODA1/DCC2 family. In terms of assembly, component of the outer dynein arm-docking complex along with ODAD2, ODAD3, ODAD4 and CLXN. Interacts with ODAD3. Interacts with ODAD4; this interaction may facilitate the recruitment and/or attachment of outer dynein arm docking complex proteins including ODAD1, ODAD3, and ODAD4 to ciliary axonemes. Interacts with DNAH9. Interacts with MNS1. Interacts with PIERCE1 and PIERCE2; the interactions link the outer dynein arms docking complex (ODA-DC) to the internal microtubule inner proteins (MIP) in cilium axoneme. Expressed in motile ciliated tissues.

The protein localises to the cytoplasm. It is found in the cytoskeleton. The protein resides in the cilium axoneme. Component of the outer dynein arm-docking complex that mediates outer dynein arms (ODA) binding onto the doublet microtubule. Involved in mediating assembly of both ODAs and their axonemal docking complex onto ciliary microtubules. The polypeptide is Outer dynein arm-docking complex subunit 1 (Odad1) (Mus musculus (Mouse)).